A 93-amino-acid chain; its full sequence is uncharacterized protein (93 aa).

A disordered region spans residues 26–73 (NRGTIFRPMTRNSGIVGRRGGPVAPAPFRNNVQKPGTRPPGFKPPSGV).

This is an uncharacterized protein from Caenorhabditis elegans.